A 175-amino-acid chain; its full sequence is Glycine-rich RNA-binding protein 1 (175 aa).

The region spanning 3–81 is the RRM domain; the sequence is AKVYVGNLSW…RRIRVNMANS (79 aa). The disordered stretch occupies residues 114 to 175; it reads GQPGGFQQPG…GYGGYNGQSQ (62 aa). A compositionally biased stretch (low complexity) spans 122 to 131; it reads PGGFQQQGGY. Positions 132–141 are enriched in gly residues; sequence PQQGGYGGYQ. Residues 142 to 162 show a composition bias toward low complexity; sequence QPGFQPQQGGYGAPQQGYGAP. Residues 163–175 are compositionally biased toward gly residues; sequence QQGGYGGYNGQSQ.

This sequence belongs to the glycine-rich RNA-binding protein family. Part of large ribonucleoprotein complexes (mRNPs) containing RNA-binding proteins RRM4 and PAB1, endosome-binding protein UPA1, core scaffold protein UPA2 and associated factor GRP1.

Its subcellular location is the endosome. Its function is as follows. Component of endosomal mRNA transport that regulates polarity of the infectious hyphae by transporting a broad spectrum of cargo mRNAs from the nucleus to cell poles. In Mycosarcoma maydis (Corn smut fungus), this protein is Glycine-rich RNA-binding protein 1.